Here is a 72-residue protein sequence, read N- to C-terminus: uncharacterized protein (72 aa).

This sequence belongs to the ycf76 family.

It is found in the plastid. It localises to the chloroplast. This is an uncharacterized protein from Oryza nivara (Indian wild rice).